A 238-amino-acid chain; its full sequence is Uridylate kinase (238 aa).

Position 10–13 (10–13) interacts with ATP; the sequence is KFSG. An involved in allosteric activation by GTP region spans residues 18–23; that stretch reads GGNGFG. Gly-52 serves as a coordination point for UMP. Gly-53 and Arg-57 together coordinate ATP. Residues Asp-73 and 134-141 each bind UMP; that span reads TGNPFFTT. Positions 161, 167, and 170 each coordinate ATP.

It belongs to the UMP kinase family. As to quaternary structure, homohexamer.

It is found in the cytoplasm. The catalysed reaction is UMP + ATP = UDP + ADP. It participates in pyrimidine metabolism; CTP biosynthesis via de novo pathway; UDP from UMP (UMPK route): step 1/1. Allosterically activated by GTP. Inhibited by UTP. In terms of biological role, catalyzes the reversible phosphorylation of UMP to UDP. This chain is Uridylate kinase, found in Campylobacter fetus subsp. fetus (strain 82-40).